Here is a 368-residue protein sequence, read N- to C-terminus: Apolipoprotein A-V (368 aa).

An N-terminal signal peptide occupies residues 1-20; that stretch reads MAAVITWALALLAVFASTQA. Ser52 carries the phosphoserine modification. Residues 231–255 are a coiled coil; sequence TRKAKDLHTSIQRNLDQLRDELSAF. Residues 305–333 form a disordered region; it reads EEIQHQLAPPPPSHSAFAPELGHSDSNKA.

It belongs to the apolipoprotein A1/A4/E family. As to quaternary structure, interacts with GPIHBP1. Interacts with SORL1; this interaction leads to APOA5 internalization and sorting either to lysosomes and degradation, or to the trans-Golgi network. Post-translationally, phosphorylated by FAM20C in the extracellular medium. As to expression, liver.

The protein localises to the secreted. It localises to the early endosome. The protein resides in the late endosome. It is found in the golgi apparatus. Its subcellular location is the trans-Golgi network. In terms of biological role, minor apolipoprotein mainly associated with HDL and to a lesser extent with VLDL. May also be associated with chylomicrons. Important determinant of plasma triglyceride (TG) levels by both being a potent stimulator of apo-CII lipoprotein lipase (LPL) TG hydrolysis and an inhibitor of the hepatic VLDL-TG production rate (without affecting the VLDL-apoB production rate). Activates poorly lecithin:cholesterol acyltransferase (LCAT) and does not enhance efflux of cholesterol from macrophages. Binds heparin. The chain is Apolipoprotein A-V (Apoa5) from Mus musculus (Mouse).